A 158-amino-acid chain; its full sequence is Cyclic pyranopterin monophosphate synthase (158 aa).

Substrate contacts are provided by residues 76–78 (LCH) and 114–115 (ME). D129 is an active-site residue.

Belongs to the MoaC family. As to quaternary structure, homohexamer; trimer of dimers.

It carries out the reaction (8S)-3',8-cyclo-7,8-dihydroguanosine 5'-triphosphate = cyclic pyranopterin phosphate + diphosphate. It participates in cofactor biosynthesis; molybdopterin biosynthesis. Catalyzes the conversion of (8S)-3',8-cyclo-7,8-dihydroguanosine 5'-triphosphate to cyclic pyranopterin monophosphate (cPMP). The polypeptide is Cyclic pyranopterin monophosphate synthase (Shewanella baltica (strain OS155 / ATCC BAA-1091)).